The following is a 472-amino-acid chain: N-succinylglutamate 5-semialdehyde dehydrogenase 1 (472 aa).

209–214 (GGVQAG) lines the NAD(+) pocket. Residues Glu232 and Cys266 contribute to the active site.

Belongs to the aldehyde dehydrogenase family. AstD subfamily.

The enzyme catalyses N-succinyl-L-glutamate 5-semialdehyde + NAD(+) + H2O = N-succinyl-L-glutamate + NADH + 2 H(+). Its pathway is amino-acid degradation; L-arginine degradation via AST pathway; L-glutamate and succinate from L-arginine: step 4/5. Functionally, catalyzes the NAD-dependent reduction of succinylglutamate semialdehyde into succinylglutamate. This is N-succinylglutamate 5-semialdehyde dehydrogenase 1 from Caulobacter vibrioides (strain ATCC 19089 / CIP 103742 / CB 15) (Caulobacter crescentus).